A 111-amino-acid polypeptide reads, in one-letter code: Large ribosomal subunit protein uL23 (111 aa).

Belongs to the universal ribosomal protein uL23 family. As to quaternary structure, part of the 50S ribosomal subunit. Contacts protein L29, and trigger factor when it is bound to the ribosome.

In terms of biological role, one of the early assembly proteins it binds 23S rRNA. One of the proteins that surrounds the polypeptide exit tunnel on the outside of the ribosome. Forms the main docking site for trigger factor binding to the ribosome. In Chlamydia trachomatis serovar A (strain ATCC VR-571B / DSM 19440 / HAR-13), this protein is Large ribosomal subunit protein uL23.